We begin with the raw amino-acid sequence, 224 residues long: Probable proteasome subunit beta type-4 (224 aa).

It belongs to the peptidase T1B family. In terms of assembly, the 26S proteasome consists of a 20S proteasome core and two 19S regulatory subunits. The 20S proteasome core is composed of 28 subunits that are arranged in four stacked rings, resulting in a barrel-shaped structure. The two end rings are each formed by seven alpha subunits, and the two central rings are each formed by seven beta subunits. The catalytic chamber with the active sites is on the inside of the barrel.

Its subcellular location is the cytoplasm. It is found in the nucleus. Its function is as follows. Non-catalytic component of the proteasome, a multicatalytic proteinase complex which is characterized by its ability to cleave peptides with Arg, Phe, Tyr, Leu, and Glu adjacent to the leaving group at neutral or slightly basic pH. The proteasome has an ATP-dependent proteolytic activity. This Cryptococcus neoformans var. neoformans serotype D (strain B-3501A) (Filobasidiella neoformans) protein is Probable proteasome subunit beta type-4 (CPR1).